Here is a 124-residue protein sequence, read N- to C-terminus: Ribonuclease pancreatic (124 aa).

Positions 1-13 (KESAAAKFERQHM) are enriched in basic and acidic residues. The tract at residues 1-25 (KESAAAKFERQHMDPSPSSASSSNY) is disordered. The substrate site is built by Lys7 and Arg10. The active-site Proton acceptor is the His12. 4 disulfide bridges follow: Cys26–Cys84, Cys40–Cys95, Cys58–Cys110, and Cys65–Cys72. Asn34 is a glycosylation site (N-linked (GlcNAc...) asparagine; partial). Substrate is bound by residues 41 to 45 (KPVNT), Lys66, and Arg85. His119 serves as the catalytic Proton donor.

Belongs to the pancreatic ribonuclease family. As to quaternary structure, monomer. Interacts with and forms tight 1:1 complexes with RNH1. Dimerization of two such complexes may occur. Interaction with RNH1 inhibits this protein. In terms of tissue distribution, pancreas.

It localises to the secreted. It carries out the reaction an [RNA] containing cytidine + H2O = an [RNA]-3'-cytidine-3'-phosphate + a 5'-hydroxy-ribonucleotide-3'-[RNA].. It catalyses the reaction an [RNA] containing uridine + H2O = an [RNA]-3'-uridine-3'-phosphate + a 5'-hydroxy-ribonucleotide-3'-[RNA].. In terms of biological role, endonuclease that catalyzes the cleavage of RNA on the 3' side of pyrimidine nucleotides. Acts on single-stranded and double-stranded RNA. This is Ribonuclease pancreatic (RNASE1) from Capreolus capreolus (European roe deer).